Consider the following 54-residue polypeptide: FATVDCSDHPKPVCSLEYMPLCGSDSKTYSNKCDFCNAVVESNGTLTLSHFGKC.

One can recognise a Kazal-like domain in the interval 4-54; it reads VDCSDHPKPVCSLEYMPLCGSDSKTYSNKCDFCNAVVESNGTLTLSHFGKC. Cystine bridges form between C6-C36, C14-C33, and C22-C54. Residue N43 is glycosylated (N-linked (GlcNAc...) asparagine).

Its subcellular location is the secreted. The polypeptide is Ovomucoid (Rhea americana (Greater rhea)).